The sequence spans 76 residues: ATP synthase subunit 9, mitochondrial (76 aa).

An N-formylmethionine modification is found at M1. 2 helical membrane passes run 14–34 (LASIGLVGAGIGIAIVFAALI) and 52–72 (ILGFALSEATGLFALMIAFLL).

As to quaternary structure, F-type ATP synthases have 2 components, the catalytic core F(1) and the membrane-embedded component F(0), linked together by a central stalk and a peripheral stalk. The central stalk, also called rotor shaft, is often seen as part of F(1). The peripheral stalk is seen as part of F(0). F(0) contains the membrane channel next to the rotor. F-type ATP synthases form dimers but each monomer functions independently in ATP generation. The dimer consists of 17 different polypeptides: ATP1 (subunit alpha, 3 molecules per monomer, part of F(1)), ATP2 (subunit beta, 3 copies per monomer, part of F(1)), ATP3 (subunit gamma, part of the central stalk), ATP4 (subunit b, part of the peripheral stalk), ATP5/OSCP (subunit 5/OSCP, part of the peripheral stalk), ATP6 (subunit a, part of the peripheral stalk), ATP7 (subunit d, part of the peripheral stalk), ATP8 (subunit 8, part of the peripheral stalk), OLI1 (subunit c, part of the rotor, 10 molecules per monomer), ATP14 (subunit h, part of the peripheral stalk), ATP15 (subunit epsilon, part of the central stalk), ATP16 (subunit delta, part of the central stalk), ATP17 (subunit f, part of the peripheral stalk), ATP18 (subunit i/j, part of the peripheral stalk), ATP19 (subunit k, dimer-specific, at interface between monomers), ATP20 (subunit g, at interface between monomers), TIM11 (subunit e, at interface between monomers).

It localises to the mitochondrion inner membrane. Its function is as follows. Mitochondrial membrane ATP synthase (F(1)F(0) ATP synthase or Complex V) produces ATP from ADP in the presence of a proton gradient across the membrane which is generated by electron transport complexes of the respiratory chain. F-type ATP synthases consist of two structural domains, F(1) - containing the extramembraneous catalytic core, and F(0) - containing the membrane proton channel, linked together by a central stalk and a peripheral stalk. During catalysis, ATP synthesis in the catalytic domain of F(1) is coupled via a rotary mechanism of the central stalk subunits to proton translocation. Part of the complex F(0) domain. A homomeric c-ring of 10 OLI1/ATP9 subunits is part of the complex rotary element. The polypeptide is ATP synthase subunit 9, mitochondrial (Yarrowia lipolytica (strain CLIB 122 / E 150) (Yeast)).